The sequence spans 450 residues: Flavin-containing monooxygenase FMO GS-OX-like 3 (450 aa).

17-22 (GAGPAG) contacts FAD. 215 to 220 (GNSSSA) contributes to the NADP(+) binding site.

This sequence belongs to the FMO family. It depends on FAD as a cofactor.

Catalyzes the conversion of methylthioalkyl glucosinolates of any chain length into methylsulfinylalkyl glucosinolates. The chain is Flavin-containing monooxygenase FMO GS-OX-like 3 from Arabidopsis thaliana (Mouse-ear cress).